A 327-amino-acid chain; its full sequence is Delta(3,5)-Delta(2,4)-dienoyl-CoA isomerase, mitochondrial (327 aa).

The transit peptide at methionine 1–serine 33 directs the protein to the mitochondrion. Serine 115–leucine 119 provides a ligand contact to substrate. An N6-acetyllysine modification is found at lysine 147. Glycine 173 lines the substrate pocket. An N6-succinyllysine modification is found at lysine 230. Serine 267 carries the post-translational modification Phosphoserine. Position 316 is an N6-succinyllysine (lysine 316). The short motif at serine 325 to leucine 327 is the Microbody targeting signal element. N6-acetyllysine is present on lysine 326.

This sequence belongs to the enoyl-CoA hydratase/isomerase family. As to quaternary structure, homohexamer.

The protein resides in the mitochondrion. It is found in the peroxisome. The catalysed reaction is (3E,5Z)-octadienoyl-CoA = (2E,4E)-octadienoyl-CoA. It catalyses the reaction (3E,5Z,8Z,11Z,14Z)-eicosapentaenoyl-CoA = (2E,4E,8Z,11Z,14Z)-eicosapentaenoyl-CoA. The protein operates within lipid metabolism; fatty acid beta-oxidation. Isomerization of 3-trans,5-cis-dienoyl-CoA to 2-trans,4-trans-dienoyl-CoA. This is Delta(3,5)-Delta(2,4)-dienoyl-CoA isomerase, mitochondrial from Mus musculus (Mouse).